A 123-amino-acid chain; its full sequence is Homeobox protein CDX-1 (123 aa).

A DNA-binding region (homeobox) is located at residues 5 to 64 (KDKYRVVYTDHQRLELEKEFHYSRYITIRRKSELAANLGLTERQVKIWFQNRRAKERKVN). The segment at 8-29 (YRVVYTDHQRLELEKEFHYSRY) is interaction with DNA. The interval 47-58 (RQVKIWFQNRRA) is interaction with 5-mCpG DNA. Positions 57 to 68 (RAKERKVNKKKQ) are enriched in basic residues. Residues 57–123 (RAKERKVNKK…PVPVKEEFLP (67 aa)) are disordered.

The protein belongs to the Caudal homeobox family. In terms of tissue distribution, intestinal epithelium.

The protein resides in the nucleus. In terms of biological role, plays a role in transcriptional regulation. Involved in activated KRAS-mediated transcriptional activation of PRKD1 in colorectal cancer (CRC) cells. Binds to the PRKD1 promoter in colorectal cancer (CRC) cells. Could play a role in the terminal differentiation of the intestine. Binds preferentially to methylated DNA. The protein is Homeobox protein CDX-1 (Cdx1) of Rattus norvegicus (Rat).